The primary structure comprises 337 residues: Large ribosomal subunit protein uL3 (337 aa).

Residues 1–26 (MTRHHQPRKGSVAFSPRKRVARETPR) form a disordered region.

This sequence belongs to the universal ribosomal protein uL3 family. In terms of assembly, part of the 50S ribosomal subunit. Forms a cluster with proteins L14 and L24e.

Functionally, one of the primary rRNA binding proteins, it binds directly near the 3'-end of the 23S rRNA, where it nucleates assembly of the 50S subunit. The chain is Large ribosomal subunit protein uL3 from Methanosphaera stadtmanae (strain ATCC 43021 / DSM 3091 / JCM 11832 / MCB-3).